Reading from the N-terminus, the 508-residue chain is Photosystem II CP47 reaction center protein (508 aa).

The next 6 helical transmembrane spans lie at 21 to 36 (SVHI…WAGS), 101 to 115 (IILA…MWHW), 140 to 156 (GIHL…FGAF), 203 to 218 (IAAG…FHLS), 237 to 252 (VLSS…AFVV), and 457 to 472 (CFAL…HGAR).

Belongs to the PsbB/PsbC family. PsbB subfamily. As to quaternary structure, PSII is composed of 1 copy each of membrane proteins PsbA, PsbB, PsbC, PsbD, PsbE, PsbF, PsbH, PsbI, PsbJ, PsbK, PsbL, PsbM, PsbT, PsbX, PsbY, PsbZ, Psb30/Ycf12, at least 3 peripheral proteins of the oxygen-evolving complex and a large number of cofactors. It forms dimeric complexes. Requires Binds multiple chlorophylls. PSII binds additional chlorophylls, carotenoids and specific lipids. as cofactor.

It is found in the plastid. Its subcellular location is the chloroplast thylakoid membrane. One of the components of the core complex of photosystem II (PSII). It binds chlorophyll and helps catalyze the primary light-induced photochemical processes of PSII. PSII is a light-driven water:plastoquinone oxidoreductase, using light energy to abstract electrons from H(2)O, generating O(2) and a proton gradient subsequently used for ATP formation. The protein is Photosystem II CP47 reaction center protein of Mesostigma viride (Green alga).